Reading from the N-terminus, the 632-residue chain is Golgin subfamily A member 8M (632 aa).

A disordered region spans residues 1–77; it reads MAEETQHNKL…SSATLKDLES (77 aa). Positions 38–50 are enriched in polar residues; it reads TNGSIPQTATSGG. Coiled coils occupy residues 86-154 and 209-421; these read LDSR…HMKR and KLEQ…SLMA. Residues 352–362 are compositionally biased toward basic and acidic residues; it reads KQEERIQEQHK. 3 disordered regions span residues 352-384, 422-456, and 505-524; these read KQEE…NKST, LPGE…REAM, and DAAL…DEGE. Residues 508 to 520 show a composition bias toward gly residues; that stretch reads LGGGHHQAGAQGG.

Belongs to the GOLGA8 family.

This is Golgin subfamily A member 8M from Homo sapiens (Human).